We begin with the raw amino-acid sequence, 122 residues long: Large ribosomal subunit protein uL14 (122 aa).

This sequence belongs to the universal ribosomal protein uL14 family. As to quaternary structure, part of the 50S ribosomal subunit. Forms a cluster with proteins L3 and L19. In the 70S ribosome, L14 and L19 interact and together make contacts with the 16S rRNA in bridges B5 and B8.

Binds to 23S rRNA. Forms part of two intersubunit bridges in the 70S ribosome. This chain is Large ribosomal subunit protein uL14, found in Brucella anthropi (strain ATCC 49188 / DSM 6882 / CCUG 24695 / JCM 21032 / LMG 3331 / NBRC 15819 / NCTC 12168 / Alc 37) (Ochrobactrum anthropi).